A 126-amino-acid chain; its full sequence is uncharacterized protein (126 aa).

Basic residues-rich tracts occupy residues 21-31 (RKKRKKRKKRR) and 41-83 (RILK…RKRR). The segment at 21 to 83 (RKKRKKRKKR…RSPRKRRKRR (63 aa)) is disordered.

This is an uncharacterized protein from Saccharomyces cerevisiae (strain ATCC 204508 / S288c) (Baker's yeast).